Here is a 236-residue protein sequence, read N- to C-terminus: uncharacterized protein (236 aa).

A signal peptide spans 1-26; the sequence is MTNTWNRLALLIFAVLSLLVAGELQA.

This sequence belongs to the periplasmic pilus chaperone family.

It is found in the periplasm. In terms of biological role, part of the elfADCG-ycbUVF fimbrial operon, which promotes adhesion of bacteria to different abiotic surfaces. Could be required for the biogenesis of fimbriae. This is an uncharacterized protein from Escherichia coli (strain K12).